The following is a 516-amino-acid chain: Cytochrome P450 1A2 (516 aa).

Serine 69 carries O-linked (GlcNAc) serine glycosylation. Residue phenylalanine 226 participates in substrate binding. Cysteine 458 serves as a coordination point for heme.

Belongs to the cytochrome P450 family. In terms of assembly, interacts with PGRMC1; the interaction requires PGRMC1 homodimerization. Requires heme as cofactor.

Its subcellular location is the endoplasmic reticulum membrane. The protein resides in the microsome membrane. It catalyses the reaction an organic molecule + reduced [NADPH--hemoprotein reductase] + O2 = an alcohol + oxidized [NADPH--hemoprotein reductase] + H2O + H(+). The catalysed reaction is 17beta-estradiol + reduced [NADPH--hemoprotein reductase] + O2 = 2-hydroxy-17beta-estradiol + oxidized [NADPH--hemoprotein reductase] + H2O + H(+). It carries out the reaction 17beta-estradiol + reduced [NADPH--hemoprotein reductase] + O2 = 4-hydroxy-17beta-estradiol + oxidized [NADPH--hemoprotein reductase] + H2O + H(+). The enzyme catalyses estrone + reduced [NADPH--hemoprotein reductase] + O2 = 2-hydroxyestrone + oxidized [NADPH--hemoprotein reductase] + H2O + H(+). It catalyses the reaction estrone + reduced [NADPH--hemoprotein reductase] + O2 = 4-hydroxyestrone + oxidized [NADPH--hemoprotein reductase] + H2O + H(+). The catalysed reaction is cholesterol + reduced [NADPH--hemoprotein reductase] + O2 = 25-hydroxycholesterol + oxidized [NADPH--hemoprotein reductase] + H2O + H(+). It carries out the reaction all-trans-retinol + reduced [NADPH--hemoprotein reductase] + O2 = all-trans-retinal + oxidized [NADPH--hemoprotein reductase] + 2 H2O + H(+). The enzyme catalyses all-trans-retinal + reduced [NADPH--hemoprotein reductase] + O2 = all-trans-retinoate + oxidized [NADPH--hemoprotein reductase] + H2O + 2 H(+). It catalyses the reaction (5Z,8Z,11Z,14Z)-eicosatetraenoate + reduced [NADPH--hemoprotein reductase] + O2 = (14R,15S)-epoxy-(5Z,8Z,11Z)-eicosatrienoate + oxidized [NADPH--hemoprotein reductase] + H2O + H(+). The catalysed reaction is (5Z,8Z,11Z,14Z)-eicosatetraenoate + reduced [NADPH--hemoprotein reductase] + O2 = (14S,15R)-epoxy-(5Z,8Z,11Z)-eicosatrienoate + oxidized [NADPH--hemoprotein reductase] + H2O + H(+). It carries out the reaction (5Z,8Z,11Z,14Z,17Z)-eicosapentaenoate + reduced [NADPH--hemoprotein reductase] + O2 = (17R,18S)-epoxy-(5Z,8Z,11Z,14Z)-eicosatetraenoate + oxidized [NADPH--hemoprotein reductase] + H2O + H(+). The enzyme catalyses (4Z,7Z,10Z,13Z,16Z,19Z)-docosahexaenoate + reduced [NADPH--hemoprotein reductase] + O2 = (19R,20S)-epoxy-(4Z,7Z,10Z,13Z,16Z)-docosapentaenoate + oxidized [NADPH--hemoprotein reductase] + H2O + H(+). It catalyses the reaction (5S)-hydroperoxy-(6E,8Z,11Z,14Z)-eicosatetraenoate = 5-oxo-(6E,8Z,11Z,14Z)-eicosatetraenoate + H2O. The catalysed reaction is (12S)-hydroperoxy-(5Z,8Z,10E,14Z)-eicosatetraenoate = 12-oxo-(5Z,8Z,10E,14Z)-eicosatetraenoate + H2O. It carries out the reaction (15S)-hydroperoxy-(5Z,8Z,11Z,13E)-eicosatetraenoate = 15-oxo-(5Z,8Z,11Z,13E)-eicosatetraenoate + H2O. The enzyme catalyses (13S)-hydroperoxy-(9Z,11E)-octadecadienoate = 13-oxo-(9Z,11E)-octadecadienoate + H2O. It catalyses the reaction (5Z,8Z,11Z,14Z)-eicosatetraenoate + reduced [NADPH--hemoprotein reductase] + O2 = 13-hydroxy-(5Z,8Z,11Z,14Z)-eicosatetraenoate + oxidized [NADPH--hemoprotein reductase] + H2O + H(+). The catalysed reaction is (5Z,8Z,11Z,14Z)-eicosatetraenoate + reduced [NADPH--hemoprotein reductase] + O2 = 19-hydroxy-(5Z,8Z,11Z,14Z)-eicosatetraenoate + oxidized [NADPH--hemoprotein reductase] + H2O + H(+). It carries out the reaction (9Z,12Z)-octadecadienoate + reduced [NADPH--hemoprotein reductase] + O2 = 11-hydroxy-(9Z,12Z)-octadecadienoate + oxidized [NADPH--hemoprotein reductase] + H2O + H(+). Its pathway is cofactor metabolism; retinol metabolism. It participates in steroid metabolism; cholesterol metabolism. The protein operates within lipid metabolism; arachidonate metabolism. Its function is as follows. A cytochrome P450 monooxygenase involved in the metabolism of various endogenous substrates, including fatty acids, steroid hormones and vitamins. Mechanistically, uses molecular oxygen inserting one oxygen atom into a substrate, and reducing the second into a water molecule, with two electrons provided by NADPH via cytochrome P450 reductase (NADPH--hemoprotein reductase). Catalyzes the hydroxylation of carbon-hydrogen bonds. Exhibits high catalytic activity for the formation of hydroxyestrogens from estrone (E1) and 17beta-estradiol (E2), namely 2-hydroxy E1 and E2. Metabolizes cholesterol toward 25-hydroxycholesterol, a physiological regulator of cellular cholesterol homeostasis. May act as a major enzyme for all-trans retinoic acid biosynthesis in the liver. Catalyzes two successive oxidative transformation of all-trans retinol to all-trans retinal and then to the active form all-trans retinoic acid. Primarily catalyzes stereoselective epoxidation of the last double bond of polyunsaturated fatty acids (PUFA), displaying a strong preference for the (R,S) stereoisomer. Catalyzes bisallylic hydroxylation and omega-1 hydroxylation of PUFA. May also participate in eicosanoids metabolism by converting hydroperoxide species into oxo metabolites (lipoxygenase-like reaction, NADPH-independent). Plays a role in the oxidative metabolism of xenobiotics. Catalyzes the N-hydroxylation of heterocyclic amines and the O-deethylation of phenacetin. Metabolizes caffeine via N3-demethylation. The polypeptide is Cytochrome P450 1A2 (CYP1A2) (Pongo abelii (Sumatran orangutan)).